Consider the following 627-residue polypeptide: Membrane protein insertase YidC (627 aa).

Residues 8-28 traverse the membrane as a helical segment; sequence LFLALILSMGIWMGVNYFFFP. Polar residues predominate over residues 33–57; it reads KKNTETKQTQSDKTSENTKQQITSG. Residues 33–68 are disordered; sequence KKNTETKQTQSDKTSENTKQQITSGKTKESNSADPV. Over residues 58-68 the composition is skewed to basic and acidic residues; it reads KTKESNSADPV. 4 consecutive transmembrane segments (helical) span residues 417–437, 488–508, 536–556, and 575–595; these read FTIPNYGWSIIIFAILFKLVF, VGGCLPMVIQIPIFIALYTAF, AIPYFTQTGIGLNLLALLMVG, and MLMYVMPVMMLYIFWNMPSGV.

Belongs to the OXA1/ALB3/YidC family. Type 1 subfamily. Interacts with the Sec translocase complex via SecD. Specifically interacts with transmembrane segments of nascent integral membrane proteins during membrane integration.

The protein localises to the cell inner membrane. Functionally, required for the insertion and/or proper folding and/or complex formation of integral membrane proteins into the membrane. Involved in integration of membrane proteins that insert both dependently and independently of the Sec translocase complex, as well as at least some lipoproteins. Aids folding of multispanning membrane proteins. The protein is Membrane protein insertase YidC of Leptospira interrogans serogroup Icterohaemorrhagiae serovar copenhageni (strain Fiocruz L1-130).